A 77-amino-acid polypeptide reads, in one-letter code: Acyl carrier protein (77 aa).

In terms of domain architecture, Carrier spans 2 to 77 (SNIEERVKKI…AAIDYVSKNQ (76 aa)). O-(pantetheine 4'-phosphoryl)serine is present on Ser-37.

This sequence belongs to the acyl carrier protein (ACP) family. 4'-phosphopantetheine is transferred from CoA to a specific serine of apo-ACP by AcpS. This modification is essential for activity because fatty acids are bound in thioester linkage to the sulfhydryl of the prosthetic group.

It is found in the cytoplasm. The protein operates within lipid metabolism; fatty acid biosynthesis. In terms of biological role, carrier of the growing fatty acid chain in fatty acid biosynthesis. The chain is Acyl carrier protein from Shewanella oneidensis (strain ATCC 700550 / JCM 31522 / CIP 106686 / LMG 19005 / NCIMB 14063 / MR-1).